Reading from the N-terminus, the 684-residue chain is Glycine--tRNA ligase beta subunit (684 aa).

Belongs to the class-II aminoacyl-tRNA synthetase family. As to quaternary structure, tetramer of two alpha and two beta subunits.

Its subcellular location is the cytoplasm. It carries out the reaction tRNA(Gly) + glycine + ATP = glycyl-tRNA(Gly) + AMP + diphosphate. This chain is Glycine--tRNA ligase beta subunit, found in Pseudomonas aeruginosa (strain ATCC 15692 / DSM 22644 / CIP 104116 / JCM 14847 / LMG 12228 / 1C / PRS 101 / PAO1).